The following is a 408-amino-acid chain: uncharacterized protein (408 aa).

The a divalent metal cation site is built by Glu35, Asp61, and Asn96.

The protein belongs to the metallophosphoesterase superfamily. Requires a divalent metal cation as cofactor.

This is an uncharacterized protein from Bacillus subtilis (strain 168).